The primary structure comprises 536 residues: Phosphoenolpyruvate carboxykinase (ATP) (536 aa).

Residues Arg-62, Tyr-203, and Lys-209 each coordinate substrate. ATP is bound by residues Lys-209, His-228, and 244–252 (GLSGTGKTT). The Mn(2+) site is built by Lys-209 and His-228. Asp-265 contacts Mn(2+). ATP contacts are provided by residues Glu-293, Arg-329, 445-446 (RI), and Thr-451. Substrate is bound at residue Arg-329.

This sequence belongs to the phosphoenolpyruvate carboxykinase (ATP) family. In terms of assembly, monomer. Requires Mn(2+) as cofactor.

The protein resides in the cytoplasm. It carries out the reaction oxaloacetate + ATP = phosphoenolpyruvate + ADP + CO2. It functions in the pathway carbohydrate biosynthesis; gluconeogenesis. In terms of biological role, involved in the gluconeogenesis. Catalyzes the conversion of oxaloacetate (OAA) to phosphoenolpyruvate (PEP) through direct phosphoryl transfer between the nucleoside triphosphate and OAA. This chain is Phosphoenolpyruvate carboxykinase (ATP), found in Glaesserella parasuis serovar 5 (strain SH0165) (Haemophilus parasuis).